The sequence spans 120 residues: Large ribosomal subunit protein uL18 (120 aa).

Positions 1-22 (MKLTRRESKNRRHRRVRGKVVG) are disordered. Over residues 8–18 (SKNRRHRRVRG) the composition is skewed to basic residues.

It belongs to the universal ribosomal protein uL18 family. In terms of assembly, part of the 50S ribosomal subunit; part of the 5S rRNA/L5/L18/L25 subcomplex. Contacts the 5S and 23S rRNAs.

In terms of biological role, this is one of the proteins that bind and probably mediate the attachment of the 5S RNA into the large ribosomal subunit, where it forms part of the central protuberance. This is Large ribosomal subunit protein uL18 from Nostoc punctiforme (strain ATCC 29133 / PCC 73102).